A 52-amino-acid polypeptide reads, in one-letter code: Large ribosomal subunit protein eL39 (52 aa).

Belongs to the eukaryotic ribosomal protein eL39 family.

The chain is Large ribosomal subunit protein eL39 from Desulfurococcus amylolyticus (strain DSM 18924 / JCM 16383 / VKM B-2413 / 1221n) (Desulfurococcus kamchatkensis).